We begin with the raw amino-acid sequence, 357 residues long: Hydroxyproline O-arabinosyltransferase RDN1 (357 aa).

The chain crosses the membrane as a helical; Signal-anchor span at residues 13–33 (LLMLLMVLGFSFATYNLVFMM).

In terms of tissue distribution, expressed in the vasculature of leaves, petioles, stems and roots. Expressed in the vascular cylinder throughout the root, and nodule vasculature.

The protein resides in the golgi apparatus membrane. The catalysed reaction is trans-4-hydroxy-L-prolyl-[protein] + UDP-beta-L-arabinofuranose = O-(beta-L-arabinofuranosyl)-trans-4-hydroxy-L-prolyl-[protein] + UDP + H(+). Probable glycosyltransferase involved in the O-arabinosylation of several proteins including extensins and small signaling peptides. Catalyzes the transfer of the initial L-arabinose to the hydroxyl group of Hyp residues. Probably involved in the arabinosylation of CLE12, a signaling peptide that moves from root to shoot, to interact with SUNN receptor kinase signaling that regulates nodulation. Involved in long distance nodulation signaling events. Involved in the autoregulation of nodulation (AON), a long distance systemic signaling from root to shoot and back again, which allows legumes to limit the number of root nodules formed based on available nitrogen and previous rhizobial colonization. Functions in the root, upstream of the shoot receptor kinase SUNN and via CLE peptide, to control AON. This chain is Hydroxyproline O-arabinosyltransferase RDN1, found in Medicago truncatula (Barrel medic).